The sequence spans 161 residues: Allophycocyanin alpha chain (161 aa).

Asn71 bears the N4-methylasparagine mark. Cys81 lines the (2R,3E)-phycocyanobilin pocket.

This sequence belongs to the phycobiliprotein family. As to quaternary structure, component of the phycobilisome. Heterodimer of an alpha and a beta chain. Contains one covalently linked phycocyanobilin chromophore.

The protein resides in the cellular thylakoid membrane. Functionally, light-harvesting photosynthetic bile pigment-protein from the phycobiliprotein complex. Allophycocyanin has a maximum absorption at approximately 650 nanometers. This chain is Allophycocyanin alpha chain (apcA), found in Arthrospira platensis (Spirulina platensis).